Reading from the N-terminus, the 427-residue chain is UDP-N-acetylglucosamine 1-carboxyvinyltransferase (427 aa).

24 to 25 (KN) is a phosphoenolpyruvate binding site. Arg-95 is a UDP-N-acetyl-alpha-D-glucosamine binding site. Cys-119 (proton donor) is an active-site residue. Cys-119 is subject to 2-(S-cysteinyl)pyruvic acid O-phosphothioketal. UDP-N-acetyl-alpha-D-glucosamine is bound by residues 124 to 128 (RPVDQ), Asp-308, and Val-330.

Belongs to the EPSP synthase family. MurA subfamily.

It is found in the cytoplasm. The enzyme catalyses phosphoenolpyruvate + UDP-N-acetyl-alpha-D-glucosamine = UDP-N-acetyl-3-O-(1-carboxyvinyl)-alpha-D-glucosamine + phosphate. The protein operates within cell wall biogenesis; peptidoglycan biosynthesis. In terms of biological role, cell wall formation. Adds enolpyruvyl to UDP-N-acetylglucosamine. The chain is UDP-N-acetylglucosamine 1-carboxyvinyltransferase from Deinococcus geothermalis (strain DSM 11300 / CIP 105573 / AG-3a).